The following is a 197-amino-acid chain: NADH-quinone oxidoreductase subunit B (197 aa).

Residues Cys-63, Cys-64, Cys-129, and Cys-159 each coordinate [4Fe-4S] cluster.

The protein belongs to the complex I 20 kDa subunit family. In terms of assembly, NDH-1 is composed of 14 different subunits. Subunits NuoB, C, D, E, F, and G constitute the peripheral sector of the complex. [4Fe-4S] cluster serves as cofactor.

Its subcellular location is the cell inner membrane. The catalysed reaction is a quinone + NADH + 5 H(+)(in) = a quinol + NAD(+) + 4 H(+)(out). NDH-1 shuttles electrons from NADH, via FMN and iron-sulfur (Fe-S) centers, to quinones in the respiratory chain. The immediate electron acceptor for the enzyme in this species is believed to be a menaquinone. Couples the redox reaction to proton translocation (for every two electrons transferred, four hydrogen ions are translocated across the cytoplasmic membrane), and thus conserves the redox energy in a proton gradient. This is NADH-quinone oxidoreductase subunit B from Bacteroides thetaiotaomicron (strain ATCC 29148 / DSM 2079 / JCM 5827 / CCUG 10774 / NCTC 10582 / VPI-5482 / E50).